The sequence spans 621 residues: Protein CASP (621 aa).

At 1–574 the chain is on the cytoplasmic side; sequence MEIVSRAWES…ILATPKSRTV (574 aa). Coiled coils occupy residues 101-445 and 473-525; these read LLKG…VQDI and ILTS…FLQS. A helical; Anchor for type IV membrane protein transmembrane segment spans residues 575–595; the sequence is FFSYLLILHALIMLVLYKFAF. Over 596–621 the chain is Lumenal; that stretch reads DQSVVRDAETECEYKFHQHMLDNHKQ.

The protein belongs to the CASP family.

It localises to the golgi apparatus membrane. Its function is as follows. May be involved in intra-Golgi retrograde transport. The chain is Protein CASP (ceh-44) from Caenorhabditis elegans.